The sequence spans 334 residues: Holliday junction branch migration complex subunit RuvB (334 aa).

A large ATPase domain (RuvB-L) region spans residues 4–184 (ADRLIQPQIQ…FGIPLRLEFY (181 aa)). ATP-binding positions include R24, G65, K68, T69, T70, 131–133 (EDY), R174, Y184, and R221. T69 is a Mg(2+) binding site. Positions 185 to 255 (NIKDLSTIVT…VAEHALDLLD (71 aa)) are small ATPAse domain (RuvB-S). A head domain (RuvB-H) region spans residues 258–334 (SEGFDYMDRK…YQHFELIKPE (77 aa)). Positions 294, 313, and 318 each coordinate DNA.

This sequence belongs to the RuvB family. Homohexamer. Forms an RuvA(8)-RuvB(12)-Holliday junction (HJ) complex. HJ DNA is sandwiched between 2 RuvA tetramers; dsDNA enters through RuvA and exits via RuvB. An RuvB hexamer assembles on each DNA strand where it exits the tetramer. Each RuvB hexamer is contacted by two RuvA subunits (via domain III) on 2 adjacent RuvB subunits; this complex drives branch migration. In the full resolvosome a probable DNA-RuvA(4)-RuvB(12)-RuvC(2) complex forms which resolves the HJ.

The protein resides in the cytoplasm. The catalysed reaction is ATP + H2O = ADP + phosphate + H(+). The RuvA-RuvB-RuvC complex processes Holliday junction (HJ) DNA during genetic recombination and DNA repair, while the RuvA-RuvB complex plays an important role in the rescue of blocked DNA replication forks via replication fork reversal (RFR). RuvA specifically binds to HJ cruciform DNA, conferring on it an open structure. The RuvB hexamer acts as an ATP-dependent pump, pulling dsDNA into and through the RuvAB complex. RuvB forms 2 homohexamers on either side of HJ DNA bound by 1 or 2 RuvA tetramers; 4 subunits per hexamer contact DNA at a time. Coordinated motions by a converter formed by DNA-disengaged RuvB subunits stimulates ATP hydrolysis and nucleotide exchange. Immobilization of the converter enables RuvB to convert the ATP-contained energy into a lever motion, pulling 2 nucleotides of DNA out of the RuvA tetramer per ATP hydrolyzed, thus driving DNA branch migration. The RuvB motors rotate together with the DNA substrate, which together with the progressing nucleotide cycle form the mechanistic basis for DNA recombination by continuous HJ branch migration. Branch migration allows RuvC to scan DNA until it finds its consensus sequence, where it cleaves and resolves cruciform DNA. The polypeptide is Holliday junction branch migration complex subunit RuvB (Shewanella baltica (strain OS195)).